The primary structure comprises 626 residues: MLGKALLLLLSSPICAWAQSAADYYVKSIPGQPDGPLLKMHAGHVEVDAETNGHLFFWHFQNRHIANRQRTILWLNGGPGCSSMDGALMEIGPYRVKDDHTLIYNNGSWDEFANLLFVDQPVGTGFSYVNTNSYLHDLDHVAAHMITFLEKWFAMFPEYESDDLYIAGESYAGQYIPHIARAIVERNKNIQRNQQHWPIKGLLIGNGWISPRDQYPANLQYAYAEGIVKEGTAIANELDGIEKSCDEQLNAPGAGDLVDIRQCESILNKLLDLTRTSDDQCINVYDIRLKDATCGNAWPPDLDQMTDYLRRADVGAALNLDNGKANGWTECNNQVTANFRMGHNGVPSIQLLPGLIESGVKVLLFSGDRDLICNHLGTESLIHNMKWSGGTGFETKPGVWAPRRGWTFEGEAAGYYQQARNLTYVLFYNASHMVPYDFPRRTRDMVDRFINVDIANIGGPPADSRLDGEKLPQTSVGNTTSSTSGTDQVDEAKLKDAEWKAYTKSGEAALIVVIIGVSVWGFFIWRARQRAARDGTSPTKKGYRAVYQDGVDNNSSTDGAGLLSRFRNQSNSNSSRDLEARDFDEAELDSLTPNLQNGHERDHYVIGEEDEDEDNDIGNGAKSSLH.

Positions 1 to 18 (MLGKALLLLLSSPICAWA) are cleaved as a signal peptide. Residues 19 to 504 (QSAADYYVKS…KDAEWKAYTK (486 aa)) lie on the Lumenal side of the membrane. N-linked (GlcNAc...) asparagine glycosylation occurs at N106. Active-site residues include S170 and D370. Residues N421 and N429 are each glycosylated (N-linked (GlcNAc...) asparagine). H432 is an active-site residue. A disordered region spans residues 460-489 (PPADSRLDGEKLPQTSVGNTTSSTSGTDQV). Residues 474-486 (TSVGNTTSSTSGT) show a composition bias toward low complexity. An N-linked (GlcNAc...) asparagine glycan is attached at N478. The chain crosses the membrane as a helical span at residues 505 to 525 (SGEAALIVVIIGVSVWGFFIW). The Cytoplasmic portion of the chain corresponds to 526–626 (RARQRAARDG…IGNGAKSSLH (101 aa)). 2 disordered regions span residues 558–582 (DGAG…EARD) and 606–626 (IGEE…SSLH). The span at 564–575 (SRFRNQSNSNSS) shows a compositional bias: low complexity. The segment covering 607 to 616 (GEEDEDEDND) has biased composition (acidic residues).

It belongs to the peptidase S10 family.

It localises to the golgi apparatus. The protein resides in the trans-Golgi network membrane. The enzyme catalyses Preferential release of a C-terminal arginine or lysine residue.. In terms of biological role, protease with a carboxypeptidase B-like function involved in the C-terminal processing of the lysine and arginine residues from protein precursors. Promotes cell fusion and is involved in the programmed cell death. The polypeptide is Pheromone-processing carboxypeptidase kex1 (kex1) (Talaromyces marneffei (strain ATCC 18224 / CBS 334.59 / QM 7333) (Penicillium marneffei)).